Reading from the N-terminus, the 171-residue chain is UPF0763 protein KHP_0657 (171 aa).

Belongs to the UPF0763 family.

This Helicobacter pylori (strain 51) protein is UPF0763 protein KHP_0657.